The primary structure comprises 397 residues: Lysophospholipid transporter LplT (397 aa).

Topologically, residues 1-17 are periplasmic; sequence MSESVHTNTSLWSKGMK. The helical transmembrane segment at 18-38 threads the bilayer; it reads AVIVAQFLSAFGDNALLFATL. Over 39–52 the chain is Cytoplasmic; that stretch reads ALLKAQFYPEWSQP. The chain crosses the membrane as a helical span at residues 53-73; it reads ILQMVFVGAYILFAPFVGQVA. Residues 74-90 lie on the Periplasmic side of the membrane; the sequence is DSFAKGRVMMFANGLKL. A helical membrane pass occupies residues 91 to 111; it reads LGAASICFGINPFLGYTLVGV. At 112 to 144 the chain is on the cytoplasmic side; sequence GAAAYSPAKYGILGELTTGSKLVKANGLMEAST. The chain crosses the membrane as a helical span at residues 145 to 165; the sequence is IAAILLGSVAGGVLADWHVLV. Residue alanine 166 is a topological domain, periplasmic. Residues 167–187 form a helical membrane-spanning segment; it reads LAACALAYGGAVVANIYIPKL. Residues 188 to 226 are Cytoplasmic-facing; the sequence is AAARPGQSWNLINMTRSFLNACTSLWRNGETRFSLVGTS. A helical transmembrane segment spans residues 227-247; it reads LFWGAGVTLRFLLVLWVPVAL. The Periplasmic portion of the chain corresponds to 248–256; the sequence is GITDNATPT. The helical transmembrane segment at 257–277 threads the bilayer; the sequence is YLNAMVAIGIVVGAGAAAKLV. The Cytoplasmic portion of the chain corresponds to 278–280; that stretch reads TLE. The chain crosses the membrane as a helical span at residues 281 to 301; the sequence is TVSRCMPAGILIGVVVLIFSL. Topologically, residues 302-304 are periplasmic; the sequence is QHE. Residues 305 to 325 form a helical membrane-spanning segment; it reads LLPAYALLMLIGVMGGFFVVP. The Cytoplasmic portion of the chain corresponds to 326-343; sequence LNALLQERGKKSVGAGNA. The helical transmembrane segment at 344 to 364 threads the bilayer; the sequence is IAVQNLGENSAMLLMLGIYSL. Residues 365 to 366 are Periplasmic-facing; it reads AV. A helical transmembrane segment spans residues 367–387; that stretch reads MVGIPVVPIGIGFGALFALAI. The Cytoplasmic segment spans residues 388–397; the sequence is TALWIWQRRH.

This sequence belongs to the major facilitator superfamily. LplT (TC 2.A.1.42) family.

Its subcellular location is the cell inner membrane. Its function is as follows. Catalyzes the facilitated diffusion of 2-acyl-glycero-3-phosphoethanolamine (2-acyl-GPE) into the cell. In Escherichia coli (strain ATCC 8739 / DSM 1576 / NBRC 3972 / NCIMB 8545 / WDCM 00012 / Crooks), this protein is Lysophospholipid transporter LplT.